Here is a 178-residue protein sequence, read N- to C-terminus: ATP synthase subunit delta (178 aa).

This sequence belongs to the ATPase delta chain family. In terms of assembly, F-type ATPases have 2 components, F(1) - the catalytic core - and F(0) - the membrane proton channel. F(1) has five subunits: alpha(3), beta(3), gamma(1), delta(1), epsilon(1). F(0) has three main subunits: a(1), b(2) and c(10-14). The alpha and beta chains form an alternating ring which encloses part of the gamma chain. F(1) is attached to F(0) by a central stalk formed by the gamma and epsilon chains, while a peripheral stalk is formed by the delta and b chains.

It is found in the cell inner membrane. In terms of biological role, f(1)F(0) ATP synthase produces ATP from ADP in the presence of a proton or sodium gradient. F-type ATPases consist of two structural domains, F(1) containing the extramembraneous catalytic core and F(0) containing the membrane proton channel, linked together by a central stalk and a peripheral stalk. During catalysis, ATP synthesis in the catalytic domain of F(1) is coupled via a rotary mechanism of the central stalk subunits to proton translocation. Its function is as follows. This protein is part of the stalk that links CF(0) to CF(1). It either transmits conformational changes from CF(0) to CF(1) or is implicated in proton conduction. This Stutzerimonas stutzeri (strain A1501) (Pseudomonas stutzeri) protein is ATP synthase subunit delta.